Consider the following 1311-residue polypeptide: Zinc finger protein 521 (1311 aa).

Positions 1–10 (MSRRKQAKPR) are enriched in basic residues. Residues 1–37 (MSRRKQAKPRSLKDPNCKLEDKTEDGEALDCKKRPED) form a disordered region. The span at 11–21 (SLKDPNCKLED) shows a compositional bias: basic and acidic residues. The C2H2-type 1; degenerate zinc finger occupies 47-67 (HSCDSCLQVFESLSDITEHKI). The interval 81–108 (DPTCSWPASSPSSKDQTSPSHGEGCDFG) is disordered. The span at 87 to 102 (PASSPSSKDQTSPSHG) shows a compositional bias: low complexity. 7 consecutive C2H2-type zinc fingers follow at residues 118 to 140 (YPCQFCDKSFSRLSYLKHHEQSH), 146 to 168 (FKCTYCSRLFKHKRSRDRHIKLH), 174 to 196 (YHCSECDAAFSRSDHLKIHLKTH), 202 to 224 (YKCAICRRGFLSSSSLHGHMQVH), 246 to 269 (QKCSQCEEGFDFPEDLQKHIAECH), 281 to 304 (LQCVYCHELFVEETSLMNHMEQVH), and 310 to 332 (NSCSICSESFHTVEELYSHMDSH). The segment covering 349–358 (VGYTSVSSTT) has biased composition (low complexity). The interval 349–397 (VGYTSVSSTTPDSNLSVDSSTMVEAAPPIPKSRGRKRAAQQTPDMTGPS) is disordered. Composition is skewed to polar residues over residues 359 to 370 (PDSNLSVDSSTM) and 387 to 397 (AQQTPDMTGPS). Residues 405–429 (YSCIYCNKQLFSSLAVLQIHLKTMH) form a C2H2-type 9; degenerate zinc finger. 3 consecutive C2H2-type zinc fingers follow at residues 437 to 460 (HICQYCLEVLPSLYNLNEHLKQVH), 477 to 500 (YQCNFCSEVVNDLNTLQEHIRCSH), and 513 to 536 (FFCPHCYMGFLTDSSLEEHIRQVH). Phosphoserine is present on serine 546. Residues 560–585 (YSCSYCTNSPIFNSVLKLNKHIKENH) form a C2H2-type 13; atypical zinc finger. A phosphoserine mark is found at serine 605 and serine 608. C2H2-type zinc fingers lie at residues 634–656 (YICNQCGAKYTSLDSFQTHLKTH), 664–686 (LTCPQCNKEFPNQESLLKHVTIH), 694–717 (YICESCDKQFTSVDDLQKHLLDMH), 722–745 (FRCTLCQEVFDSKVSIQLHLAVKH), 752–775 (YRCTSCNWDFRNETDLQLHVKHNH), 783–805 (HKCIFCGESFGTEVELQCHITTH), and 809–832 (YNCKFCSKAFHAIILLEKHLREKH). The disordered stretch occupies residues 863–882 (TNSQESHNSHDGSEEDVDTS). The C2H2-type 21; degenerate zinc finger occupies 886 to 908 (YGCDICGAAYTMETLLQNHQLRD). C2H2-type zinc fingers lie at residues 930-952 (YKCNVCSRTFFSENGLREHMQTH), 959-981 (YMCPICGERFPSLLTLTEHKVTH), and 1020-1042 (FRCVVCMQTVTSTLELKIHGTFH). The C2H2-type 25; degenerate zinc-finger motif lies at 1065–1083 (YKCASCLKEFRSKQDLVKL). Residues 1138–1161 (TRCSSCNVKFESESELQNHIQTIH) form a C2H2-type 26 zinc finger. Lysine 1146 is covalently cross-linked (Glycyl lysine isopeptide (Lys-Gly) (interchain with G-Cter in SUMO2)). Positions 1168–1178 (SNSTQLKTPQV) are enriched in polar residues. Residues 1168 to 1188 (SNSTQLKTPQVSPMPRISPSQ) form a disordered region. C2H2-type zinc fingers lie at residues 1195 to 1217 (YQCIKCQMVFYNEWDIQVHVANH), 1225 to 1247 (HECKLCSQTFDSPAKLQCHLIEH), 1256 to 1279 (FKCPVCFTVFVQANKLQQHIFSAH), and 1286 to 1309 (YDCTQCPQKFFFQTELQNHTMTQH).

It belongs to the krueppel C2H2-type zinc-finger protein family. Interacts with EBF1. Interacts with SMAD1 and SMAD4. Predominantly expressed in hematopoietic cells. Present in organs and tissues that contain stem and progenitor cells, myeloid and/or lymphoid: placenta, spleen, lymph nodes, thymus, bone marrow and fetal liver. Within the hematopoietic system, it is abundant in CD34(+) cells but undetectable in mature peripheral blood leukocytes, and its levels rapidly decrease during the differentiation of CD34(+) cells in response to hemopoietins.

The protein resides in the nucleus. Functionally, transcription factor that can both act as an activator or a repressor depending on the context. Involved in BMP signaling and in the regulation of the immature compartment of the hematopoietic system. Associates with SMADs in response to BMP2 leading to activate transcription of BMP target genes. Acts as a transcriptional repressor via its interaction with EBF1, a transcription factor involved specification of B-cell lineage; this interaction preventing EBF1 to bind DNA and activate target genes. The chain is Zinc finger protein 521 (ZNF521) from Homo sapiens (Human).